Reading from the N-terminus, the 1319-residue chain is Chitin-binding domain protein cbd-1 (1319 aa).

A signal peptide spans 1–19 (MGPQLATVSLLLLTFFSNS). 3 consecutive Chitin-binding type-2 domains span residues 28 to 83 (ATEC…ECRV), 96 to 141 (EFDC…TQDC), and 190 to 236 (DFDC…QSCD). 3 disulfides stabilise this stretch: Cys-61/Cys-72, Cys-128/Cys-141, and Cys-222/Cys-235. Residues 250 to 271 (YSTSTITTPQEDDSEYSSTTSA) form a disordered region. The Chitin-binding type-2 4 domain maps to 304–357 (PFVCQEGQVNSFGMCSSRFNRCQNNSVRSKQCPVNTLFESSLVMCVFDLPQCQP). An N-linked (GlcNAc...) asparagine glycan is attached at Asn-327. Cys-335 and Cys-348 form a disulfide bridge. Positions 504 to 524 (KNRHSKKQLGPHEDPDGYDDE) are disordered. A compositionally biased stretch (basic and acidic residues) spans 513–524 (GPHEDPDGYDDE). Positions 566–614 (NKDCQQYTTPTFLTFGDCFDQFIFCSGNGINRMAACPIGETFDKTLRSC) constitute a Chitin-binding type-2 5 domain. A disulfide bond links Cys-601 and Cys-614. The interval 649 to 682 (VTTQSTWNDQPSTTQAPNSYESYTTQYSSNDVPS) is disordered. 3 consecutive Chitin-binding type-2 domains span residues 689–745 (GDRC…ECGS), 782–838 (GDRC…KCQT), and 883–942 (VDTC…ACDE). Cysteines 721 and 734 form a disulfide. The interval 742–764 (ECGSQGSTSSPVITTPGQDQSSN) is disordered. Polar residues predominate over residues 745-764 (SQGSTSSPVITTPGQDQSSN). Intrachain disulfides connect Cys-814/Cys-827 and Cys-916/Cys-929. The segment covering 984 to 995 (TGSTKYSTTDSG) has biased composition (polar residues). The interval 984–1031 (TGSTKYSTTDSGEYTIPYGDETTSTRSYDRADNDSEDEEEDDVEHDQK) is disordered. Asn-1016 is a glycosylation site (N-linked (GlcNAc...) asparagine). Positions 1017 to 1027 (DSEDEEEDDVE) are enriched in acidic residues. Chitin-binding type-2 domains are found at residues 1029–1081 (DQKC…GCGK), 1105–1163 (EGRC…ACTV), 1179–1237 (SAFC…GCEN), and 1242–1298 (NGEC…SCSG). 4 disulfide bridges follow: Cys-1060–Cys-1073, Cys-1139–Cys-1152, Cys-1213–Cys-1226, and Cys-1274–Cys-1287. Positions 1297–1312 (SGQASDSNSSYGSSTY) are enriched in low complexity. Positions 1297–1319 (SGQASDSNSSYGSSTYNDDKSGY) are disordered. Residue Asn-1304 is glycosylated (N-linked (GlcNAc...) asparagine).

It is found in the secreted. The protein resides in the extracellular space. The protein localises to the extracellular matrix. In unfertilized oocytes, maintains egg-1 and egg-2 at the plasma membrane together with chitin synthase chs-1 and kinase mbk-2. Essential for the formation of a continuous and cohesive chitin layer following fertilization. This Caenorhabditis elegans protein is Chitin-binding domain protein cbd-1.